The following is a 234-amino-acid chain: Adenosine 5'-phosphosulfate reductase (234 aa).

[4Fe-4S] cluster-binding residues include Cys-120, Cys-121, Cys-203, and Cys-206. Cys-229 functions as the Nucleophile; cysteine thiosulfonate intermediate in the catalytic mechanism.

The protein belongs to the PAPS reductase family. CysH subfamily. The cofactor is [4Fe-4S] cluster.

The protein resides in the cytoplasm. It carries out the reaction [thioredoxin]-disulfide + sulfite + AMP + 2 H(+) = adenosine 5'-phosphosulfate + [thioredoxin]-dithiol. It functions in the pathway sulfur metabolism; hydrogen sulfide biosynthesis; sulfite from sulfate. Functionally, catalyzes the formation of sulfite from adenosine 5'-phosphosulfate (APS) using thioredoxin as an electron donor. This is Adenosine 5'-phosphosulfate reductase from Bacillus mycoides (strain KBAB4) (Bacillus weihenstephanensis).